Consider the following 369-residue polypeptide: Molybdenum import ATP-binding protein ModC (369 aa).

One can recognise an ABC transporter domain in the interval 7–243 (PGQAGIHARF…LDLPMAMTDD (237 aa)). 41–48 (GQSGSGKT) lines the ATP pocket. Residues 304-369 (EGSILNVLAV…AQIKAVSLLA (66 aa)) enclose the Mop domain.

The protein belongs to the ABC transporter superfamily. Molybdate importer (TC 3.A.1.8) family. The complex is composed of two ATP-binding proteins (ModC), two transmembrane proteins (ModB) and a solute-binding protein (ModA).

The protein resides in the cell inner membrane. It catalyses the reaction molybdate(out) + ATP + H2O = molybdate(in) + ADP + phosphate + H(+). Functionally, part of the ABC transporter complex ModABC involved in molybdenum import. Responsible for energy coupling to the transport system. This Bordetella bronchiseptica (strain ATCC BAA-588 / NCTC 13252 / RB50) (Alcaligenes bronchisepticus) protein is Molybdenum import ATP-binding protein ModC.